Reading from the N-terminus, the 320-residue chain is Zinc finger protein-like 1 (320 aa).

The B box-type; degenerate zinc-finger motif lies at 1–43; it reads MGLCKCPKRKVTNLFCFEHRVNVCEHCLVANHAKCIVQSYLQW. Topologically, residues 1–274 are cytoplasmic; it reads MGLCKCPKRK…KSRPASSMQR (274 aa). The RING-type; degenerate zinc-finger motif lies at 53-101; the sequence is CRLCNTLLSSKETARLVCYDLFHWSCLNDLATQQPPNTAPAGYRCPSCQ. A helical membrane pass occupies residues 275–295; the sequence is FLVILIIGVLGFLTLILLMSK. Over 296-320 the chain is Lumenal; that stretch reads LGRASADNDPNLDPLLNPHIHVGKE.

The protein belongs to the ZFPL1 family.

It localises to the golgi apparatus. The protein localises to the cis-Golgi network membrane. Its function is as follows. Required for cis-Golgi integrity and efficient ER to Golgi transport. In Xenopus laevis (African clawed frog), this protein is Zinc finger protein-like 1 (zfpl1).